We begin with the raw amino-acid sequence, 403 residues long: Phosphopentomutase (403 aa).

6 residues coordinate Mn(2+): Asp13, Asp298, His303, Asp339, His340, and His351.

This sequence belongs to the phosphopentomutase family. Mn(2+) serves as cofactor.

It is found in the cytoplasm. The catalysed reaction is 2-deoxy-alpha-D-ribose 1-phosphate = 2-deoxy-D-ribose 5-phosphate. It carries out the reaction alpha-D-ribose 1-phosphate = D-ribose 5-phosphate. It participates in carbohydrate degradation; 2-deoxy-D-ribose 1-phosphate degradation; D-glyceraldehyde 3-phosphate and acetaldehyde from 2-deoxy-alpha-D-ribose 1-phosphate: step 1/2. In terms of biological role, isomerase that catalyzes the conversion of deoxy-ribose 1-phosphate (dRib-1-P) and ribose 1-phosphate (Rib-1-P) to deoxy-ribose 5-phosphate (dRib-5-P) and ribose 5-phosphate (Rib-5-P), respectively. The protein is Phosphopentomutase of Streptococcus thermophilus.